The sequence spans 329 residues: Aspartate carbamoyltransferase catalytic subunit (329 aa).

Residues Arg63 and Thr64 each coordinate carbamoyl phosphate. Lys91 serves as a coordination point for L-aspartate. Residues Arg113, His141, and Gln144 each contribute to the carbamoyl phosphate site. L-aspartate is bound by residues Arg179 and Arg234. Carbamoyl phosphate-binding residues include Gly275 and Pro276.

Belongs to the aspartate/ornithine carbamoyltransferase superfamily. ATCase family. In terms of assembly, heterododecamer (2C3:3R2) of six catalytic PyrB chains organized as two trimers (C3), and six regulatory PyrI chains organized as three dimers (R2).

It carries out the reaction carbamoyl phosphate + L-aspartate = N-carbamoyl-L-aspartate + phosphate + H(+). It participates in pyrimidine metabolism; UMP biosynthesis via de novo pathway; (S)-dihydroorotate from bicarbonate: step 2/3. Functionally, catalyzes the condensation of carbamoyl phosphate and aspartate to form carbamoyl aspartate and inorganic phosphate, the committed step in the de novo pyrimidine nucleotide biosynthesis pathway. This chain is Aspartate carbamoyltransferase catalytic subunit, found in Magnetococcus marinus (strain ATCC BAA-1437 / JCM 17883 / MC-1).